The following is a 544-amino-acid chain: Chaperonin GroEL 1 (544 aa).

Residues 29 to 32 (TLGP), 86 to 90 (DGTTT), Gly-413, 479 to 481 (NAA), and Asp-495 contribute to the ATP site.

The protein belongs to the chaperonin (HSP60) family. Forms a cylinder of 14 subunits composed of two heptameric rings stacked back-to-back. Interacts with the co-chaperonin GroES.

The protein localises to the cytoplasm. It carries out the reaction ATP + H2O + a folded polypeptide = ADP + phosphate + an unfolded polypeptide.. Functionally, together with its co-chaperonin GroES, plays an essential role in assisting protein folding. The GroEL-GroES system forms a nano-cage that allows encapsulation of the non-native substrate proteins and provides a physical environment optimized to promote and accelerate protein folding. This Synechococcus sp. (strain CC9902) protein is Chaperonin GroEL 1.